A 232-amino-acid chain; its full sequence is MTVQQRRRPPIASRETLQALLSEGAQALGVALSDAQRGALLDYVALLAKWNAVYNLTAIRDPRQMLIQHILDSLSIVPHLGAHGAAAAALDVGSGGGLPGVVLAIALPGWRVTLNDIVHKKSAFQNQAKAELKLGNLSVVTGRVETLRPGADVPAKFDVIVSRAFADLADFVTLARHLVAPGGSIWAMKGVRPDEEIGRLPDGARVKQMIRLTVPSLDAERHLIEVELDEAI.

S-adenosyl-L-methionine is bound by residues Gly93, Leu98, 144–145 (VE), and Arg163.

The protein belongs to the methyltransferase superfamily. RNA methyltransferase RsmG family.

The protein localises to the cytoplasm. It catalyses the reaction guanosine(527) in 16S rRNA + S-adenosyl-L-methionine = N(7)-methylguanosine(527) in 16S rRNA + S-adenosyl-L-homocysteine. Its function is as follows. Specifically methylates the N7 position of guanine in position 527 of 16S rRNA. The protein is Ribosomal RNA small subunit methyltransferase G of Burkholderia pseudomallei (strain 1710b).